A 315-amino-acid polypeptide reads, in one-letter code: Methionyl-tRNA formyltransferase (315 aa).

(6S)-5,6,7,8-tetrahydrofolate is bound at residue Ser-113 to Pro-116.

Belongs to the Fmt family.

It carries out the reaction L-methionyl-tRNA(fMet) + (6R)-10-formyltetrahydrofolate = N-formyl-L-methionyl-tRNA(fMet) + (6S)-5,6,7,8-tetrahydrofolate + H(+). In terms of biological role, attaches a formyl group to the free amino group of methionyl-tRNA(fMet). The formyl group appears to play a dual role in the initiator identity of N-formylmethionyl-tRNA by promoting its recognition by IF2 and preventing the misappropriation of this tRNA by the elongation apparatus. This chain is Methionyl-tRNA formyltransferase, found in Escherichia coli (strain SE11).